A 154-amino-acid chain; its full sequence is Myoglobin (154 aa).

The Globin domain occupies 2-148 (GLSDGEWQLV…FRNDMAAKYK (147 aa)). Residue Ser4 is modified to Phosphoserine. His65 contributes to the nitrite binding site. Residue His65 participates in O2 binding. Thr68 carries the post-translational modification Phosphothreonine. His94 contacts heme b.

Belongs to the globin family. Monomeric.

It is found in the cytoplasm. The protein resides in the sarcoplasm. The catalysed reaction is Fe(III)-heme b-[protein] + nitric oxide + H2O = Fe(II)-heme b-[protein] + nitrite + 2 H(+). It catalyses the reaction H2O2 + AH2 = A + 2 H2O. Functionally, monomeric heme protein which primary function is to store oxygen and facilitate its diffusion within muscle tissues. Reversibly binds oxygen through a pentacoordinated heme iron and enables its timely and efficient release as needed during periods of heightened demand. Depending on the oxidative conditions of tissues and cells, and in addition to its ability to bind oxygen, it also has a nitrite reductase activity whereby it regulates the production of bioactive nitric oxide. Under stress conditions, like hypoxia and anoxia, it also protects cells against reactive oxygen species thanks to its pseudoperoxidase activity. This Ochotona curzoniae (Black-lipped pika) protein is Myoglobin (MB).